The sequence spans 491 residues: UDP-N-acetylmuramate--L-alanine ligase (491 aa).

An ATP-binding site is contributed by 126–132; that stretch reads GTHGKTT.

Belongs to the MurCDEF family.

Its subcellular location is the cytoplasm. The enzyme catalyses UDP-N-acetyl-alpha-D-muramate + L-alanine + ATP = UDP-N-acetyl-alpha-D-muramoyl-L-alanine + ADP + phosphate + H(+). It participates in cell wall biogenesis; peptidoglycan biosynthesis. Cell wall formation. This Shigella dysenteriae serotype 1 (strain Sd197) protein is UDP-N-acetylmuramate--L-alanine ligase.